A 1188-amino-acid chain; its full sequence is MTESQSYETRQARPAGQSLAERVARLVAIDPQAAAAVPDKAVAERATQQGLRLAQRIEAFLSGYGDRPALAQRAFEITKDPITGRAVATLLPKFETVSYRELLERSHAIASELANHAEAPVKAGEFIATIGFTSTDYTSLDIAGVLLGLTSVPLQTGATTDTLKAIAEETAPAVFGASVEHLDNAVTTALATPSVRRLLVFDYRQGVDEDREAVEAARSRLAEAGSAVLVDTLDEVIARGRALPRVALPPATDAGDDSLSLLIYTSGSTGTPKGAMYPERNVAQFWGGIWHNAFDDGDSAPDVPDIMVNFMPLSHVAGRIGLMGTLSSGGTTYFIAKSDLSTFFEDYSLARPTKLFFVPRICEMIYQHYQSELDRIGAADGSPQAEAIKTELREKLLGGRVLTAGSGSAPMSPELTAFIESVLQVHLVDGYGSTEAGPVWRDRKLVKPPVTEHKLIDVPELGYFSTDSPYPRGELAIKTQTILPGYYKRPETTAEVFDEDGFYLTGDVVAEVAPEEFVYVDRRKNVLKLSQGEFVALSKLEAAYGTSPLVRQISVYGSSQRSYLLAVVVPTPEALAKYGDGEAVKSALGDSLQKIAREEGLQSYEVPRDFIIETDPFTIENGILSDAGKTLRPKVKARYGERLEALYAQLAETQAGELRSIRVGAGERPVIETVQRAAAALLGASAAEVDPEAHFSDLGGDSLSALTYSNFLHEIFQVEVPVSVIVSAANNLRSVAAHIEKERSSGSDRPTFASVHGAGATTIRASDLKLEKFLDAQTLAAAPSLPRPASEVRTVLLTGSNGWLGRFLALAWLERLVPQGGKVVVIVRGKDDKAAKARLDSVFESGDPALLAHYEDLADKGLEVLAGDFSDADLGLRKADWDRLADEVDLIVHSGALVNHVLPYSQLFGPNVVGTAEVAKLALTKRLKPVTYLSTVAVAVGVEPSAFEEDGDIRDVSAVRSIDEGYANGYGNSKWAGEVLLREAYEHAGLPVRVFRSDMILAHRKYTGQLNVPDQFTRLILSLLATGIAPKSFYQLDATGGRQRAHYDGIPVDFTAEAITTLGLAGSDGYHSFDVFNPHHDGVGLDEFVDWLVEAGHPISRVDDYAEWLSRFETSLRGLPEAQRQHSVLPLLHAFAQPAPAIDGSPFQTKNFQSSVQEAKVGAEHDIPHLDKALIVKYAEDIKQLGLL.

AMP contacts are provided by residues His315, Ser408, 429–430 (DG), Thr434, Asp507, 519–522 (YVDR), Lys528, and Lys629. A Carrier domain is found at 665 to 743 (AGERPVIETV…SVAAHIEKER (79 aa)). The residue at position 702 (Ser702) is an O-(pantetheine 4'-phosphoryl)serine. Residues 801–804 (NGWL), Arg828, Arg838, 868–869 (DF), 894–896 (SGA), Ser934, Tyr970, Lys974, and Ser997 each bind NADP(+).

Belongs to the ATP-dependent AMP-binding enzyme family. Carboxylic acid reductase subfamily. Requires pantetheine 4'-phosphate as cofactor.

It carries out the reaction a carboxylate + ATP + NADPH + H(+) = an aldehyde + AMP + diphosphate + NADP(+). Its function is as follows. Catalyzes the ATP- and NADPH-dependent reduction of carboxylic acids to the corresponding aldehydes. Catalyzes the reduction of a very wide range of carboxylic acids, including benzoic acids, heterocyclic, phenylacetic, phenylpropanoic and fatty acid substrates. This is Carboxylic acid reductase from Segniliparus rugosus (strain ATCC BAA-974 / DSM 45345 / CCUG 50838 / CIP 108380 / JCM 13579 / CDC 945).